Consider the following 305-residue polypeptide: N-acetylmuramic acid 6-phosphate etherase (305 aa).

In terms of domain architecture, SIS spans 59-222; that stretch reads TSKALGKGGR…STGVMVKLGK (164 aa). Residue Glu-87 is the Proton donor of the active site. Residue Glu-118 is part of the active site.

This sequence belongs to the GCKR-like family. MurNAc-6-P etherase subfamily. In terms of assembly, homodimer.

It catalyses the reaction N-acetyl-D-muramate 6-phosphate + H2O = N-acetyl-D-glucosamine 6-phosphate + (R)-lactate. Its pathway is amino-sugar metabolism; N-acetylmuramate degradation. In terms of biological role, specifically catalyzes the cleavage of the D-lactyl ether substituent of MurNAc 6-phosphate, producing GlcNAc 6-phosphate and D-lactate. This Crocosphaera subtropica (strain ATCC 51142 / BH68) (Cyanothece sp. (strain ATCC 51142)) protein is N-acetylmuramic acid 6-phosphate etherase.